Here is a 338-residue protein sequence, read N- to C-terminus: Holliday junction branch migration complex subunit RuvB (338 aa).

The segment at 4 to 184 (ADRLMSAAAV…FGIVQRLEFY (181 aa)) is large ATPase domain (RuvB-L). Residues Ile23, Arg24, Gly65, Lys68, Thr69, Thr70, 131 to 133 (EDY), Arg174, Tyr184, and Arg221 each bind ATP. A Mg(2+)-binding site is contributed by Thr69. The small ATPAse domain (RuvB-S) stretch occupies residues 185-255 (QTGDLQHIVS…VAVSALNMLN (71 aa)). The interval 258–338 (TEGFDFMDRK…GLEEHGGDPE (81 aa)) is head domain (RuvB-H). 3 residues coordinate DNA: Arg294, Arg313, and Arg318.

It belongs to the RuvB family. As to quaternary structure, homohexamer. Forms an RuvA(8)-RuvB(12)-Holliday junction (HJ) complex. HJ DNA is sandwiched between 2 RuvA tetramers; dsDNA enters through RuvA and exits via RuvB. An RuvB hexamer assembles on each DNA strand where it exits the tetramer. Each RuvB hexamer is contacted by two RuvA subunits (via domain III) on 2 adjacent RuvB subunits; this complex drives branch migration. In the full resolvosome a probable DNA-RuvA(4)-RuvB(12)-RuvC(2) complex forms which resolves the HJ.

It is found in the cytoplasm. The catalysed reaction is ATP + H2O = ADP + phosphate + H(+). Its function is as follows. The RuvA-RuvB-RuvC complex processes Holliday junction (HJ) DNA during genetic recombination and DNA repair, while the RuvA-RuvB complex plays an important role in the rescue of blocked DNA replication forks via replication fork reversal (RFR). RuvA specifically binds to HJ cruciform DNA, conferring on it an open structure. The RuvB hexamer acts as an ATP-dependent pump, pulling dsDNA into and through the RuvAB complex. RuvB forms 2 homohexamers on either side of HJ DNA bound by 1 or 2 RuvA tetramers; 4 subunits per hexamer contact DNA at a time. Coordinated motions by a converter formed by DNA-disengaged RuvB subunits stimulates ATP hydrolysis and nucleotide exchange. Immobilization of the converter enables RuvB to convert the ATP-contained energy into a lever motion, pulling 2 nucleotides of DNA out of the RuvA tetramer per ATP hydrolyzed, thus driving DNA branch migration. The RuvB motors rotate together with the DNA substrate, which together with the progressing nucleotide cycle form the mechanistic basis for DNA recombination by continuous HJ branch migration. Branch migration allows RuvC to scan DNA until it finds its consensus sequence, where it cleaves and resolves cruciform DNA. The protein is Holliday junction branch migration complex subunit RuvB of Sodalis glossinidius (strain morsitans).